A 254-amino-acid polypeptide reads, in one-letter code: Homeobox protein BarH-like 1 (254 aa).

Residues methionine 1–aspartate 20 are disordered. Positions glycine 142–valine 201 form a DNA-binding region, homeobox. The interval glycine 204 to aspartate 254 is disordered. Residues glutamate 230–aspartate 254 show a composition bias toward basic and acidic residues.

It belongs to the BAR homeobox family. Widely expressed. Expressed at higher levels in testis and heart. Detected in craniofacial tissue and adult iris, but not in lymphocytes, fibroblasts, choroid retina, retinal pigment epithelium, kidney, or fetal liver.

The protein localises to the nucleus. In terms of biological role, transcription factor, which is involved in craniofacial development, in odontogenesis and in stomach organogenesis. May have a role in the differentiation of molars from incisors. Plays a role in suppressing endodermal Wnt activity. Binds to a regulatory module of the NCAM promoter. The sequence is that of Homeobox protein BarH-like 1 (BARX1) from Homo sapiens (Human).